The chain runs to 144 residues: Large ribosomal subunit protein uL16 (144 aa).

Over residues 1–16 the composition is skewed to basic residues; the sequence is MLTPKRVKHRKQHRGK. The tract at residues 1 to 22 is disordered; that stretch reads MLTPKRVKHRKQHRGKMAGNAK.

This sequence belongs to the universal ribosomal protein uL16 family. In terms of assembly, part of the 50S ribosomal subunit.

Functionally, binds 23S rRNA and is also seen to make contacts with the A and possibly P site tRNAs. In Brevibacillus brevis (strain 47 / JCM 6285 / NBRC 100599), this protein is Large ribosomal subunit protein uL16.